Consider the following 277-residue polypeptide: Pantothenate synthetase (277 aa).

26–33 provides a ligand contact to ATP; it reads MGNLHEGH. Catalysis depends on H33, which acts as the Proton donor. Residue Q57 coordinates (R)-pantoate. Q57 is a beta-alanine binding site. 144-147 lines the ATP pocket; that stretch reads GKKD. A (R)-pantoate-binding site is contributed by Q150. ATP contacts are provided by residues V173 and 181–184; that span reads LSSR.

This sequence belongs to the pantothenate synthetase family. As to quaternary structure, homodimer.

It is found in the cytoplasm. It carries out the reaction (R)-pantoate + beta-alanine + ATP = (R)-pantothenate + AMP + diphosphate + H(+). It participates in cofactor biosynthesis; (R)-pantothenate biosynthesis; (R)-pantothenate from (R)-pantoate and beta-alanine: step 1/1. In terms of biological role, catalyzes the condensation of pantoate with beta-alanine in an ATP-dependent reaction via a pantoyl-adenylate intermediate. The polypeptide is Pantothenate synthetase (Paraburkholderia xenovorans (strain LB400)).